The primary structure comprises 167 residues: Phosphopantetheine adenylyltransferase (167 aa).

Thr9 contributes to the substrate binding site. ATP contacts are provided by residues 9–10 (TF) and His17. Residues Lys41, Leu73, and Arg87 each coordinate substrate. ATP is bound by residues 88 to 90 (GLR), Glu98, and 123 to 129 (YQFISGT).

This sequence belongs to the bacterial CoaD family. Homohexamer. Mg(2+) serves as cofactor.

It localises to the cytoplasm. It carries out the reaction (R)-4'-phosphopantetheine + ATP + H(+) = 3'-dephospho-CoA + diphosphate. The protein operates within cofactor biosynthesis; coenzyme A biosynthesis; CoA from (R)-pantothenate: step 4/5. In terms of biological role, reversibly transfers an adenylyl group from ATP to 4'-phosphopantetheine, yielding dephospho-CoA (dPCoA) and pyrophosphate. The sequence is that of Phosphopantetheine adenylyltransferase from Bordetella avium (strain 197N).